Here is a 554-residue protein sequence, read N- to C-terminus: Probable efflux pump gsfJ (554 aa).

14 consecutive transmembrane segments (helical) span residues 54–74, 93–115, 120–140, 152–172, 181–201, 206–226, 248–268, 279–299, 321–341, 349–369, 379–399, 410–430, 447–467, and 518–538; these read LAAVVFSLMLGMFLVALDNTI, SWYGSAYLMTFGCGFQSTWGKFY, IKVWFLVAVFIFEVGSLICAV, AIAGFGGSGVGVGIFTIIGFA, LLGFTGATYGIAAVLGPLIGG, KCFYINLPIGGVAAGTIFLLF, LVGATLMMGLIVSYILALQYG, VIGLLVGFFLFVLAFVTWEIY, IYMFFFSGAYFIILYYLPIYF, PIGSGVKMLALIIPLTLAAIV, IVPLFWIIGGALGTVGCGLFY, WVGYQIIVGFSTGWTFQIAMS, IVNFFMTVGGAFFISAAQCAF, and VFAITIAAFGVATVIGFFGSW.

The protein belongs to the major facilitator superfamily.

It localises to the membrane. Its function is as follows. Probable efflux pump; part of the gene cluster that mediates the biosynthesis of griseofulvin. In Penicillium aethiopicum, this protein is Probable efflux pump gsfJ.